We begin with the raw amino-acid sequence, 88 residues long: Cell division topological specificity factor (88 aa).

Belongs to the MinE family.

Functionally, prevents the cell division inhibition by proteins MinC and MinD at internal division sites while permitting inhibition at polar sites. This ensures cell division at the proper site by restricting the formation of a division septum at the midpoint of the long axis of the cell. This is Cell division topological specificity factor from Escherichia coli (strain SMS-3-5 / SECEC).